A 223-amino-acid polypeptide reads, in one-letter code: UPF0502 protein Sbal223_2520 (223 aa).

This sequence belongs to the UPF0502 family.

This is UPF0502 protein Sbal223_2520 from Shewanella baltica (strain OS223).